The sequence spans 311 residues: Ribosomal RNA small subunit methyltransferase H (311 aa).

Residues 33–35 (GGH), D53, F77, D98, and Q105 contribute to the S-adenosyl-L-methionine site.

The protein belongs to the methyltransferase superfamily. RsmH family.

It localises to the cytoplasm. The enzyme catalyses cytidine(1402) in 16S rRNA + S-adenosyl-L-methionine = N(4)-methylcytidine(1402) in 16S rRNA + S-adenosyl-L-homocysteine + H(+). Specifically methylates the N4 position of cytidine in position 1402 (C1402) of 16S rRNA. The chain is Ribosomal RNA small subunit methyltransferase H from Thiobacillus denitrificans (strain ATCC 25259 / T1).